A 375-amino-acid polypeptide reads, in one-letter code: Coproporphyrin III ferrochelatase (375 aa).

Fe-coproporphyrin III contacts are provided by Ser-59 and Tyr-128. Fe(2+) contacts are provided by His-191 and Glu-286.

It belongs to the ferrochelatase family.

The protein localises to the cytoplasm. It carries out the reaction Fe-coproporphyrin III + 2 H(+) = coproporphyrin III + Fe(2+). It participates in porphyrin-containing compound metabolism; protoheme biosynthesis. Its function is as follows. Involved in coproporphyrin-dependent heme b biosynthesis. Catalyzes the insertion of ferrous iron into coproporphyrin III to form Fe-coproporphyrin III. The sequence is that of Coproporphyrin III ferrochelatase from Streptomyces griseus subsp. griseus (strain JCM 4626 / CBS 651.72 / NBRC 13350 / KCC S-0626 / ISP 5235).